A 507-amino-acid polypeptide reads, in one-letter code: Archaeal-type glutamate synthase [NADPH] (507 aa).

4Fe-4S ferredoxin-type domains lie at 10 to 39 (FVVE…YDEN) and 41 to 70 (NRVY…VRKN). [4Fe-4S] cluster contacts are provided by cysteine 19, cysteine 22, cysteine 25, cysteine 29, cysteine 50, cysteine 53, cysteine 56, and cysteine 60.

Belongs to the glutamate synthase family. Requires FMN as cofactor.

It carries out the reaction 2 L-glutamate + NADP(+) = L-glutamine + 2-oxoglutarate + NADPH + H(+). The sequence is that of Archaeal-type glutamate synthase [NADPH] from Thermotoga maritima (strain ATCC 43589 / DSM 3109 / JCM 10099 / NBRC 100826 / MSB8).